The primary structure comprises 336 residues: Phospho-N-acetylmuramoyl-pentapeptide-transferase (336 aa).

A run of 10 helical transmembrane segments spans residues 3-23 (LTLIAAIISFMVSAFTMPYFI), 53-73 (GGTVFLLVATAVSLLVSLFSI), 78-98 (SLALISGILSIVVIYGIIGFL), 118-138 (LALQLAGGLMFYFLHVSPSGI), 143-163 (VFGYQLSLGIFYLFFVLFWVV), 174-194 (GIDGLASISVVISLVTYGVIA), 200-220 (FDVLLLIGAMIGALLGFFCFN), 226-246 (VFMGDVGSLALGAMLAAISIA), 251-271 (WTLLIIGIVYVLETSSVMLQV), and 316-336 (AFLWGVGSLASLLVLAILYVF).

Belongs to the glycosyltransferase 4 family. MraY subfamily. The cofactor is Mg(2+).

It is found in the cell membrane. It carries out the reaction UDP-N-acetyl-alpha-D-muramoyl-L-alanyl-gamma-D-glutamyl-L-lysyl-D-alanyl-D-alanine + di-trans,octa-cis-undecaprenyl phosphate = Mur2Ac(oyl-L-Ala-gamma-D-Glu-L-Lys-D-Ala-D-Ala)-di-trans,octa-cis-undecaprenyl diphosphate + UMP. It participates in cell wall biogenesis; peptidoglycan biosynthesis. In terms of biological role, catalyzes the initial step of the lipid cycle reactions in the biosynthesis of the cell wall peptidoglycan: transfers peptidoglycan precursor phospho-MurNAc-pentapeptide from UDP-MurNAc-pentapeptide onto the lipid carrier undecaprenyl phosphate, yielding undecaprenyl-pyrophosphoryl-MurNAc-pentapeptide, known as lipid I. This is Phospho-N-acetylmuramoyl-pentapeptide-transferase from Streptococcus pyogenes serotype M3 (strain ATCC BAA-595 / MGAS315).